Reading from the N-terminus, the 286-residue chain is Phycobilisome 32.1 kDa linker polypeptide, phycocyanin-associated, rod (286 aa).

In terms of domain architecture, PBS-linker spans 2-180; that stretch reads AITAAASRLG…LYRGYANSDR (179 aa). Residues 234-286 enclose the CpcD-like domain; that stretch reads DRVYRIEVTGVRSPGYPSVRRSSYAIIVPYERLSEKIQQIHKLGGKIVSITSA.

The protein belongs to the phycobilisome linker protein family.

It localises to the cellular thylakoid membrane. In terms of biological role, rod linker protein, associated with phycocyanin. Linker polypeptides determine the state of aggregation and the location of the disk-shaped phycobiliprotein units within the phycobilisome and modulate their spectroscopic properties in order to mediate a directed and optimal energy transfer. The polypeptide is Phycobilisome 32.1 kDa linker polypeptide, phycocyanin-associated, rod (cpcC) (Mastigocladus laminosus (Fischerella sp.)).